Here is a 653-residue protein sequence, read N- to C-terminus: MEKYDDIKYLSLLAKQYPTIAAASTEIINLEAILNLPKGTEHFLADLHGEYEPFVHVLKNGSGAIKRKIQEVFENSLMDCEKRSLTTLVYYPEQKLEIVLREEKDINDWYKINLYRLIELCRHVSSKYTRSKVRKALPPDFSYIIEELLHEESDNNDKQGYYDGIINTIIEIERAQEFIVALSKLIQRLVIDRLHIIGDIFDRGPRPDIILDTLINYHSVDIQWGNHDILWMGAASGNTTCIANVLRIAARYSNLDVIEDIYGINLLPLATFALKHYKNDNCIAFVPKNTDETLYGASEIELISKMHKAITIIQFKLEYEIIKRRPEFNMDHRLLLDKINYSDGTITLNNITYELCDKSFPTININNPFELTSDEKKLVSKLQISFINSDKLQKHVLFLFNKGRLYLTYNSNLLFHGCIPLNKDKTFKSMTIHGEEYKGKKLLDKFDSLAREGYFSTRGSAEKLYGIDIMWYLWTGACSSLFGKEDMTTFERYFIKDKSTHKEKKNPYYNFRDSEEMCNMIFEEFGLDPAESRIINGHVPVKNKFGENPIKCNGKLIVIDGGFAKAYRSQTGLAGYTLTYNSYGLQLISHQPFKSIEDAFSKETDILSSTQIVEKLDRKKVGDTDIGKELKNQIKDLKLLLKAYRKGLINEVR.

Belongs to the FBPase class 3 family. It depends on Mn(2+) as a cofactor.

It carries out the reaction beta-D-fructose 1,6-bisphosphate + H2O = beta-D-fructose 6-phosphate + phosphate. The protein operates within carbohydrate biosynthesis; gluconeogenesis. The sequence is that of Fructose-1,6-bisphosphatase class 3 2 from Clostridium beijerinckii (strain ATCC 51743 / NCIMB 8052) (Clostridium acetobutylicum).